A 42-amino-acid chain; its full sequence is Cytochrome b559 subunit beta (42 aa).

The helical transmembrane segment at 17-33 (WLAIHGLAVPTVFFLGA) threads the bilayer. H21 provides a ligand contact to heme.

The protein belongs to the PsbE/PsbF family. Heterodimer of an alpha subunit and a beta subunit. PSII is composed of 1 copy each of membrane proteins PsbA, PsbB, PsbC, PsbD, PsbE, PsbF, PsbH, PsbI, PsbJ, PsbK, PsbL, PsbM, PsbT, PsbX, PsbY, PsbZ, Psb30/Ycf12, at least 3 peripheral proteins of the oxygen-evolving complex and a large number of cofactors. It forms dimeric complexes. Heme b is required as a cofactor.

The protein localises to the plastid. It is found in the chloroplast thylakoid membrane. Its function is as follows. This b-type cytochrome is tightly associated with the reaction center of photosystem II (PSII). PSII is a light-driven water:plastoquinone oxidoreductase that uses light energy to abstract electrons from H(2)O, generating O(2) and a proton gradient subsequently used for ATP formation. It consists of a core antenna complex that captures photons, and an electron transfer chain that converts photonic excitation into a charge separation. The chain is Cytochrome b559 subunit beta from Guillardia theta (Cryptophyte).